A 1211-amino-acid polypeptide reads, in one-letter code: Sterol 3-beta-glucosyltransferase (1211 aa).

Positions 1 to 10 (MSQLRPRDSS) are enriched in basic and acidic residues. The segment at 1 to 61 (MSQLRPRDSS…DETEAEDDID (61 aa)) is disordered. In terms of domain architecture, GRAM 1 spans 196-235 (EKLKTTFDLSDDDEFVNDYPCWLLHEVFLQGHIYITSRYL). Positions 248 to 347 (VTMSGALSIR…WVTDLRKHIF (100 aa)) constitute a PH domain. 2 disordered regions span residues 422 to 452 (LTDS…KLSR) and 500 to 531 (VVPN…PSNW). The segment covering 423–432 (TDSDSSESDS) has biased composition (acidic residues). Basic and acidic residues predominate over residues 507 to 525 (SELKQDHAGDAPKDSEEPS). The GRAM 2 domain maps to 586 to 652 (SRFRKHFSLP…SDIENVYNLK (67 aa)). UDP-alpha-D-glucose-binding residues include Ser-770, Arg-771, Asp-773, Asn-1046, Asn-1072, Val-1073, His-1075, His-1088, Ser-1091, Gly-1092, Thr-1093, Asp-1112, and Gln-1113.

The protein belongs to the glycosyltransferase 28 family.

It is found in the cytoplasm. The protein resides in the preautophagosomal structure membrane. The catalysed reaction is a sterol + UDP-alpha-D-glucose = a sterol 3-beta-D-glucoside + UDP + H(+). It carries out the reaction ergosterol + UDP-alpha-D-glucose = ergosteryl 3-beta-D-glucoside + UDP + H(+). Sterol glycosyltransferase responsible for the glycosylation of ergosterol to form ergosterol-glucoside. Shows also activity in vitro on other sterols such as cholesterol, beta-sitosterol, stigmasterol and tomatidine. Probable sterol 3-beta-glucosyltransferase that mediates autophagic degradation of peroxisomes (pexophagy). This is Sterol 3-beta-glucosyltransferase from Komagataella phaffii (strain GS115 / ATCC 20864) (Yeast).